The chain runs to 214 residues: Adenylate kinase (214 aa).

ATP is bound at residue 12–17 (GVGKGT). The tract at residues 32–61 (STGNIFRSQIASNSELGIKLKEIVESGGYV) is NMP. AMP contacts are provided by residues T33, R38, 59-61 (GYV), 88-91 (GYPR), and Q95. Positions 126–163 (GRRICPSCNAQYHIYFKKSKLDTKCEIDQSELIQRKDD) are LID. R127 provides a ligand contact to ATP. Residues C130, C133, C150, and D153 each contribute to the Zn(2+) site. Residues R160 and R171 each coordinate AMP. ATP is bound at residue K199.

This sequence belongs to the adenylate kinase family. Monomer.

Its subcellular location is the cytoplasm. The catalysed reaction is AMP + ATP = 2 ADP. It participates in purine metabolism; AMP biosynthesis via salvage pathway; AMP from ADP: step 1/1. In terms of biological role, catalyzes the reversible transfer of the terminal phosphate group between ATP and AMP. Plays an important role in cellular energy homeostasis and in adenine nucleotide metabolism. In Mycoplasmopsis pulmonis (strain UAB CTIP) (Mycoplasma pulmonis), this protein is Adenylate kinase.